The following is a 497-amino-acid chain: Putative aldehyde dehydrogenase AldA (497 aa).

213 to 219 is a binding site for NAD(+); it reads GKGSESG. Active-site residues include E257 and C291.

This sequence belongs to the aldehyde dehydrogenase family.

The enzyme catalyses an aldehyde + NAD(+) + H2O = a carboxylate + NADH + 2 H(+). This chain is Putative aldehyde dehydrogenase AldA (aldA), found in Staphylococcus haemolyticus (strain JCSC1435).